The chain runs to 192 residues: Thymidine kinase (192 aa).

ATP contacts are provided by residues 9–16 (ASMNAGKS) and 87–90 (DEAQ). Catalysis depends on E88, which acts as the Proton acceptor. Zn(2+) is bound by residues C145, C147, C182, and H185.

It belongs to the thymidine kinase family. As to quaternary structure, homotetramer.

The protein localises to the cytoplasm. It carries out the reaction thymidine + ATP = dTMP + ADP + H(+). The chain is Thymidine kinase from Novosphingobium aromaticivorans (strain ATCC 700278 / DSM 12444 / CCUG 56034 / CIP 105152 / NBRC 16084 / F199).